Consider the following 78-residue polypeptide: DNA-directed RNA polymerase subunit omega (78 aa).

Belongs to the RNA polymerase subunit omega family. As to quaternary structure, in cyanobacteria the RNAP catalytic core is composed of 2 alpha, 1 beta, 1 beta', 1 gamma and 1 omega subunit. When a sigma factor is associated with the core the holoenzyme is formed, which can initiate transcription.

It carries out the reaction RNA(n) + a ribonucleoside 5'-triphosphate = RNA(n+1) + diphosphate. Its function is as follows. Promotes RNA polymerase assembly. Latches the N- and C-terminal regions of the beta' subunit thereby facilitating its interaction with the beta and alpha subunits. This is DNA-directed RNA polymerase subunit omega from Prochlorococcus marinus (strain AS9601).